A 267-amino-acid polypeptide reads, in one-letter code: tRNA pseudouridine synthase A (267 aa).

Asp-51 functions as the Nucleophile in the catalytic mechanism. Tyr-109 contacts substrate.

It belongs to the tRNA pseudouridine synthase TruA family. In terms of assembly, homodimer.

The enzyme catalyses uridine(38/39/40) in tRNA = pseudouridine(38/39/40) in tRNA. Formation of pseudouridine at positions 38, 39 and 40 in the anticodon stem and loop of transfer RNAs. This Staphylococcus epidermidis (strain ATCC 35984 / DSM 28319 / BCRC 17069 / CCUG 31568 / BM 3577 / RP62A) protein is tRNA pseudouridine synthase A.